Reading from the N-terminus, the 164-residue chain is Transcriptional regulator MraZ (164 aa).

SpoVT-AbrB domains follow at residues 7–57 and 86–129; these read THQN…TVGA and AYPL…NPEA. The segment at 133–164 is disordered; that stretch reads RRQAARSRARTLATSRRPASAPAAGNTAGAAE. The span at 142 to 164 shows a compositional bias: low complexity; sequence RTLATSRRPASAPAAGNTAGAAE.

It belongs to the MraZ family. As to quaternary structure, forms oligomers.

The protein localises to the cytoplasm. It is found in the nucleoid. The sequence is that of Transcriptional regulator MraZ from Gluconobacter oxydans (strain 621H) (Gluconobacter suboxydans).